Here is a 455-residue protein sequence, read N- to C-terminus: UDP-N-acetylmuramoylalanine--D-glutamate ligase (455 aa).

118 to 124 (GTNGKST) contacts ATP.

This sequence belongs to the MurCDEF family.

The protein localises to the cytoplasm. It carries out the reaction UDP-N-acetyl-alpha-D-muramoyl-L-alanine + D-glutamate + ATP = UDP-N-acetyl-alpha-D-muramoyl-L-alanyl-D-glutamate + ADP + phosphate + H(+). It participates in cell wall biogenesis; peptidoglycan biosynthesis. Cell wall formation. Catalyzes the addition of glutamate to the nucleotide precursor UDP-N-acetylmuramoyl-L-alanine (UMA). This chain is UDP-N-acetylmuramoylalanine--D-glutamate ligase, found in Myxococcus xanthus (strain DK1622).